The sequence spans 239 residues: Probable inner membrane transporter protein TsaS (239 aa).

The next 4 helical transmembrane spans lie at 65 to 85 (AIGA…WLMG), 128 to 148 (GLVG…IALL), 160 to 180 (ATVP…LFGA), and 186 to 206 (AHTF…VVLG).

Belongs to the 4-toluene sulfonate uptake permease (TSUP) (TC 2.A.102) family. As to quaternary structure, part of a two-component transport system composed of TsaT and TsaS.

The protein localises to the cell inner membrane. Functionally, involved in the uptake of p-toluenesulphonate (TSA). The sequence is that of Probable inner membrane transporter protein TsaS (tsaS) from Comamonas testosteroni (Pseudomonas testosteroni).